The following is a 114-amino-acid chain: Nucleoid-associated protein PCC7424_2224 (114 aa).

Belongs to the YbaB/EbfC family. In terms of assembly, homodimer.

Its subcellular location is the cytoplasm. The protein resides in the nucleoid. In terms of biological role, binds to DNA and alters its conformation. May be involved in regulation of gene expression, nucleoid organization and DNA protection. This chain is Nucleoid-associated protein PCC7424_2224, found in Gloeothece citriformis (strain PCC 7424) (Cyanothece sp. (strain PCC 7424)).